The primary structure comprises 355 residues: Vacuolar protein sorting-associated protein 37C (355 aa).

Residue Ser29 is modified to Phosphoserine. Residues 78–167 form the VPS37 C-terminal domain; that stretch reads VERCQEQKAK…RKPRASQELA (90 aa). The interval 159-355 is disordered; it reads KPRASQELAG…PPPGPAWPGY (197 aa). Composition is skewed to pro residues over residues 170–186 and 194–205; these read APPP…PQGT and PQPPSAMPPYPL. Positions 246–257 are enriched in low complexity; sequence PAAQPGPRGAAG. A compositionally biased stretch (pro residues) spans 321-355; the sequence is PGQPQPSVPLQPPYPPGPAPPYGFPPPPGPAWPGY.

This sequence belongs to the VPS37 family. Component of the ESCRT-I complex (endosomal sorting complex required for transport I) which consists of TSG101, VPS28, a VPS37 protein (VPS37A to -D) and MVB12A or MVB12B in a 1:1:1:1 stoichiometry. Interacts with TSG101, VPS28, MVB12A and MVB12B. Component of the ESCRT-I complex (endosomal sorting complex required for transport I) which consists of TSG101, VPS28, a VPS37 protein (VPS37A to -D) and UBAP1 in a 1:1:1:1 stoichiometry. Interacts with HGS and STAM2. Interacts with CEP55. Phosphorylated by TBK1.

The protein resides in the late endosome membrane. Component of the ESCRT-I complex, a regulator of vesicular trafficking process. Required for the sorting of endocytic ubiquitinated cargos into multivesicular bodies. May be involved in cell growth and differentiation. In Pongo abelii (Sumatran orangutan), this protein is Vacuolar protein sorting-associated protein 37C (VPS37C).